An 84-amino-acid chain; its full sequence is ATP synthase subunit c (84 aa).

2 helical membrane-spanning segments follow: residues Met1–Gly21 and Leu53–Ile73.

Belongs to the ATPase C chain family. As to quaternary structure, F-type ATPases have 2 components, F(1) - the catalytic core - and F(0) - the membrane proton channel. F(1) has five subunits: alpha(3), beta(3), gamma(1), delta(1), epsilon(1). F(0) has three main subunits: a(1), b(2) and c(10-14). The alpha and beta chains form an alternating ring which encloses part of the gamma chain. F(1) is attached to F(0) by a central stalk formed by the gamma and epsilon chains, while a peripheral stalk is formed by the delta and b chains.

Its subcellular location is the cell inner membrane. In terms of biological role, f(1)F(0) ATP synthase produces ATP from ADP in the presence of a proton or sodium gradient. F-type ATPases consist of two structural domains, F(1) containing the extramembraneous catalytic core and F(0) containing the membrane proton channel, linked together by a central stalk and a peripheral stalk. During catalysis, ATP synthesis in the catalytic domain of F(1) is coupled via a rotary mechanism of the central stalk subunits to proton translocation. Functionally, key component of the F(0) channel; it plays a direct role in translocation across the membrane. A homomeric c-ring of between 10-14 subunits forms the central stalk rotor element with the F(1) delta and epsilon subunits. The polypeptide is ATP synthase subunit c (Dictyoglomus thermophilum (strain ATCC 35947 / DSM 3960 / H-6-12)).